A 403-amino-acid polypeptide reads, in one-letter code: Probable tRNA sulfurtransferase (403 aa).

Residues 60–165 (QLVEERLKPI…KEGVFLSCRT (106 aa)) enclose the THUMP domain. ATP-binding positions include 183-184 (ML), 208-209 (HF), R265, G287, and Q296.

Belongs to the ThiI family.

Its subcellular location is the cytoplasm. The enzyme catalyses [ThiI sulfur-carrier protein]-S-sulfanyl-L-cysteine + a uridine in tRNA + 2 reduced [2Fe-2S]-[ferredoxin] + ATP + H(+) = [ThiI sulfur-carrier protein]-L-cysteine + a 4-thiouridine in tRNA + 2 oxidized [2Fe-2S]-[ferredoxin] + AMP + diphosphate. It catalyses the reaction [ThiS sulfur-carrier protein]-C-terminal Gly-Gly-AMP + S-sulfanyl-L-cysteinyl-[cysteine desulfurase] + AH2 = [ThiS sulfur-carrier protein]-C-terminal-Gly-aminoethanethioate + L-cysteinyl-[cysteine desulfurase] + A + AMP + 2 H(+). Its pathway is cofactor biosynthesis; thiamine diphosphate biosynthesis. In terms of biological role, catalyzes the ATP-dependent transfer of a sulfur to tRNA to produce 4-thiouridine in position 8 of tRNAs, which functions as a near-UV photosensor. Also catalyzes the transfer of sulfur to the sulfur carrier protein ThiS, forming ThiS-thiocarboxylate. This is a step in the synthesis of thiazole, in the thiamine biosynthesis pathway. The sulfur is donated as persulfide by IscS. In Listeria monocytogenes serotype 4b (strain CLIP80459), this protein is Probable tRNA sulfurtransferase.